A 328-amino-acid polypeptide reads, in one-letter code: Deoxynucleotidyltransferase terminal-interacting protein 1 (328 aa).

Disordered stretches follow at residues 1-30 (MGAT…GAAG) and 142-176 (ELPG…HVLS). The segment covering 12 to 22 (GPGGAERGGLE) has biased composition (gly residues). The tract at residues 56-147 (MTTSFTDPAI…RLAHELPGIK (92 aa)) is important for dimerization. Residues 142–158 (ELPGIKRGRQAEEESHR) show a composition bias toward basic and acidic residues. Positions 158-172 (RGSPIPKKRKGRPPG) form a DNA-binding region, a.T hook. Ser-160 is subject to Phosphoserine. Residues 163–169 (PKKRKGR) carry the Nuclear localization signal motif. Residues 196–315 (REGPKWDPAR…MRKYMETLRT (120 aa)) are important for DNA and nucleosome binding. The segment at residues 215–236 (GSRANKALGMGGTRGRIYIKHP) is a DNA-binding region (H-T-H motif).

As to quaternary structure, monomer and homodimer. A minor proportion may form homotrimers. Interacts with ZNF541. Interacts with the terminal deoxynucleotidyltransferase DNTT. Interacts with TRERF1. Identified in a histone deacetylase complex that contains DNTTIP1, HDAC1 and MIDEAS; this complex assembles into a tetramer that contains four copies of each protein chain. Component of a histone deacetylase complex containing DNTTIP1, ZNF541, HDAC1 and HDAC2. Identified in a complex with KCTD19, HDAC1, HDAC2 and ZNF541.

The protein localises to the nucleus. In terms of biological role, increases DNTT terminal deoxynucleotidyltransferase activity (in vitro). Also acts as a transcriptional regulator, binding to the consensus sequence 5'-GNTGCATG-3' following an AT-tract. Associates with RAB20 promoter and positively regulates its transcription. Binds DNA and nucleosomes; may recruit HDAC1 complexes to nucleosomes or naked DNA. The sequence is that of Deoxynucleotidyltransferase terminal-interacting protein 1 (Dnttip1) from Mus musculus (Mouse).